The chain runs to 362 residues: Phosphoserine aminotransferase (362 aa).

L-glutamate is bound by residues Ser-9 and Arg-42. Pyridoxal 5'-phosphate is bound by residues 76–77 (GR), Trp-102, Thr-153, Asp-174, and Gln-197. At Lys-198 the chain carries N6-(pyridoxal phosphate)lysine. A pyridoxal 5'-phosphate-binding site is contributed by 239 to 240 (NT).

The protein belongs to the class-V pyridoxal-phosphate-dependent aminotransferase family. SerC subfamily. As to quaternary structure, homodimer. Pyridoxal 5'-phosphate serves as cofactor.

The protein resides in the cytoplasm. It carries out the reaction O-phospho-L-serine + 2-oxoglutarate = 3-phosphooxypyruvate + L-glutamate. It catalyses the reaction 4-(phosphooxy)-L-threonine + 2-oxoglutarate = (R)-3-hydroxy-2-oxo-4-phosphooxybutanoate + L-glutamate. The protein operates within amino-acid biosynthesis; L-serine biosynthesis; L-serine from 3-phospho-D-glycerate: step 2/3. Its pathway is cofactor biosynthesis; pyridoxine 5'-phosphate biosynthesis; pyridoxine 5'-phosphate from D-erythrose 4-phosphate: step 3/5. In terms of biological role, catalyzes the reversible conversion of 3-phosphohydroxypyruvate to phosphoserine and of 3-hydroxy-2-oxo-4-phosphonooxybutanoate to phosphohydroxythreonine. In Klebsiella pneumoniae subsp. pneumoniae (strain ATCC 700721 / MGH 78578), this protein is Phosphoserine aminotransferase.